The primary structure comprises 236 residues: 2,3,4,5-tetrahydropyridine-2,6-dicarboxylate N-acetyltransferase (236 aa).

The protein belongs to the transferase hexapeptide repeat family. DapH subfamily.

It carries out the reaction (S)-2,3,4,5-tetrahydrodipicolinate + acetyl-CoA + H2O = L-2-acetamido-6-oxoheptanedioate + CoA. It participates in amino-acid biosynthesis; L-lysine biosynthesis via DAP pathway; LL-2,6-diaminopimelate from (S)-tetrahydrodipicolinate (acetylase route): step 1/3. In terms of biological role, catalyzes the transfer of an acetyl group from acetyl-CoA to tetrahydrodipicolinate. The chain is 2,3,4,5-tetrahydropyridine-2,6-dicarboxylate N-acetyltransferase from Geobacillus thermodenitrificans (strain NG80-2).